Consider the following 567-residue polypeptide: Septation ring formation regulator EzrA (567 aa).

Over 1–2 the chain is Extracellular; that stretch reads MG. Residues 3–21 form a helical membrane-spanning segment; it reads MAWIVLLLGAGAIIYNHVY. Topologically, residues 22 to 567 are cytoplasmic; that stretch reads RKRMYREIDR…LWQEDNSREQ (546 aa). Coiled-coil stretches lie at residues 98 to 159 and 251 to 497; these read YRQA…AYRY and HMER…IEQA.

Belongs to the EzrA family.

The protein localises to the cell membrane. Its function is as follows. Negative regulator of FtsZ ring formation; modulates the frequency and position of FtsZ ring formation. Inhibits FtsZ ring formation at polar sites. Interacts either with FtsZ or with one of its binding partners to promote depolymerization. The protein is Septation ring formation regulator EzrA of Geobacillus kaustophilus (strain HTA426).